Reading from the N-terminus, the 418-residue chain is Actin-related protein 3 (418 aa).

At Ala-2 the chain carries N-acetylalanine. Residues Lys-240, Lys-244, Lys-251, and Lys-254 each carry the N6-acetyllysine modification.

This sequence belongs to the actin family. ARP3 subfamily. As to quaternary structure, component of the Arp2/3 complex composed of ACTR2/ARP2, ACTR3/ARP3, ARPC1B/p41-ARC, ARPC2/p34-ARC, ARPC3/p21-ARC, ARPC4/p20-ARC and ARPC5/p16-ARC. Interacts with WHDC1. Interacts weakly with MEFV. Interacts with AVIL.

The protein localises to the cytoplasm. It localises to the cytoskeleton. Its subcellular location is the cell projection. The protein resides in the nucleus. Functionally, ATP-binding component of the Arp2/3 complex, a multiprotein complex that mediates actin polymerization upon stimulation by nucleation-promoting factor (NPF). The Arp2/3 complex mediates the formation of branched actin networks in the cytoplasm, providing the force for cell motility. Seems to contact the pointed end of the daughter actin filament. In podocytes, required for the formation of lamellipodia downstream of AVIL and PLCE1 regulation. In addition to its role in the cytoplasmic cytoskeleton, the Arp2/3 complex also promotes actin polymerization in the nucleus, thereby regulating gene transcription and repair of damaged DNA. The Arp2/3 complex promotes homologous recombination (HR) repair in response to DNA damage by promoting nuclear actin polymerization, leading to drive motility of double-strand breaks (DSBs). Plays a role in ciliogenesis. In Bos taurus (Bovine), this protein is Actin-related protein 3 (ACTR3).